Consider the following 289-residue polypeptide: Tachykinins (289 aa).

The N-terminal stretch at 1 to 24 (MRSQGGSFAVALLLLLLLTAAATA) is a signal peptide. Positions 25–49 (ADAEPDVESSVSTLPPGADAPRRMV) are excised as a propeptide. The interval 28 to 80 (EPDVESSVSTLPPGADAPRRMVKRAPTSSFIGMRGKKEDEKDQRAADWMGPDP) is disordered. The residue at position 61 (Arg-61) is an Arginine amide. The segment covering 62–72 (GKKEDEKDQRA) has biased composition (basic and acidic residues). Asn-95 carries the asparagine amide modification. Arg-110 carries the post-translational modification Arginine amide. A Valine amide modification is found at Val-155. The interval 156–175 (GKRAPTGFTGMRGKRPMSGD) is disordered. Arginine amide occurs at positions 167, 198, 237, and 281. Residues 285–289 (PALAE) constitute a propeptide that is removed on maturation.

The protein belongs to the tachykinin family.

It is found in the secreted. Tachykinins are active peptides which excite neurons, evoke behavioral responses, are potent vasodilators and secretagogues, and contract (directly or indirectly) many smooth muscles. Stimulates gut muscle contractions. The sequence is that of Tachykinins from Drosophila pseudoobscura pseudoobscura (Fruit fly).